A 312-amino-acid chain; its full sequence is Ribosomal protein L11 methyltransferase (312 aa).

Positions 160, 181, 203, and 246 each coordinate S-adenosyl-L-methionine.

The protein belongs to the methyltransferase superfamily. PrmA family.

The protein localises to the cytoplasm. The enzyme catalyses L-lysyl-[protein] + 3 S-adenosyl-L-methionine = N(6),N(6),N(6)-trimethyl-L-lysyl-[protein] + 3 S-adenosyl-L-homocysteine + 3 H(+). Methylates ribosomal protein L11. The sequence is that of Ribosomal protein L11 methyltransferase from Staphylococcus aureus (strain MRSA252).